A 149-amino-acid polypeptide reads, in one-letter code: uncharacterized protein (149 aa).

This is an uncharacterized protein from Methanocaldococcus jannaschii (strain ATCC 43067 / DSM 2661 / JAL-1 / JCM 10045 / NBRC 100440) (Methanococcus jannaschii).